A 182-amino-acid chain; its full sequence is ATP-dependent protease subunit HslV (182 aa).

Threonine 12 is an active-site residue. Na(+) is bound by residues alanine 167, cysteine 170, and threonine 173.

This sequence belongs to the peptidase T1B family. HslV subfamily. In terms of assembly, a double ring-shaped homohexamer of HslV is capped on each side by a ring-shaped HslU homohexamer. The assembly of the HslU/HslV complex is dependent on binding of ATP.

The protein resides in the cytoplasm. The catalysed reaction is ATP-dependent cleavage of peptide bonds with broad specificity.. With respect to regulation, allosterically activated by HslU binding. Protease subunit of a proteasome-like degradation complex believed to be a general protein degrading machinery. This is ATP-dependent protease subunit HslV from Chlorobium phaeovibrioides (strain DSM 265 / 1930) (Prosthecochloris vibrioformis (strain DSM 265)).